We begin with the raw amino-acid sequence, 322 residues long: CMP-sialic acid transporter 1 (322 aa).

Over 1–2 (MQ) the chain is Cytoplasmic. The chain crosses the membrane as a helical span at residues 3–23 (WYLVAALLTVLTSSQGILTTL). Residues 24-33 (SQSNGKYKYD) are Lumenal-facing. A helical membrane pass occupies residues 34 to 54 (YATIPFLAELFKLSFSSFFLW). Residues 55-75 (KECQSSSPPRMTKEWRSIRLY) lie on the Cytoplasmic side of the membrane. Residues 76–96 (LVPSVIYLIHNNVQFATLTYV) traverse the membrane as a helical segment. Over 97 to 100 (DPST) the chain is Lumenal. Residues 101–120 (YQIMGNLKIVTTGILFRLVL) traverse the membrane as a helical segment. Over 121 to 126 (KRKLSN) the chain is Cytoplasmic. Residues 127–144 (LQWMAVVLLAVGTTTSQV) traverse the membrane as a helical segment. Over 145–157 (KGCGDAPCDSLFS) the chain is Lumenal. Residues 158–178 (APFQGYMLGILSACLSALAGV) form a helical membrane-spanning segment. At 179-198 (YTEYLMKKNNDSLYWQNVQL) the chain is on the cytoplasmic side. The helical transmembrane segment at 199-219 (YTFGVIFNMGWLIYGDFKAGF) threads the bilayer. The Lumenal portion of the chain corresponds to 220–233 (ERGPWWQRLFNGYS). The helical transmembrane segment at 234–254 (ITTWMVVFNLGSTGLLVSWLM) threads the bilayer. Topologically, residues 255 to 262 (KYSDNIVK) are cytoplasmic. A helical transmembrane segment spans residues 263–283 (VYSTSMGMLLTMVLSVYLFNV). Over 284–286 (RAT) the chain is Lumenal.

The protein belongs to the nucleotide-sugar transporter family. CMP-Sialate:CMP antiporter (TC 2.A.7.12) subfamily.

The protein resides in the golgi apparatus membrane. Its function is as follows. Sugar transporter involved in the transport of CMP-sialic acid from the cytoplasm into the Golgi. May transport important nucleotide sugars such as CMP-Kdo (2-keto-3-deoxy-D-manno-octulosonic acid) in physiological conditions. The chain is CMP-sialic acid transporter 1 from Oryza sativa subsp. indica (Rice).